A 306-amino-acid polypeptide reads, in one-letter code: Aspartate carbamoyltransferase catalytic subunit (306 aa).

Carbamoyl phosphate is bound by residues R55 and T56. Residue K84 coordinates L-aspartate. Carbamoyl phosphate-binding residues include R105, H133, and Q136. 2 residues coordinate L-aspartate: R166 and R227. Carbamoyl phosphate-binding residues include L265 and P266.

This sequence belongs to the aspartate/ornithine carbamoyltransferase superfamily. ATCase family. As to quaternary structure, heterododecamer (2C3:3R2) of six catalytic PyrB chains organized as two trimers (C3), and six regulatory PyrI chains organized as three dimers (R2).

The enzyme catalyses carbamoyl phosphate + L-aspartate = N-carbamoyl-L-aspartate + phosphate + H(+). Its pathway is pyrimidine metabolism; UMP biosynthesis via de novo pathway; (S)-dihydroorotate from bicarbonate: step 2/3. In terms of biological role, catalyzes the condensation of carbamoyl phosphate and aspartate to form carbamoyl aspartate and inorganic phosphate, the committed step in the de novo pyrimidine nucleotide biosynthesis pathway. The chain is Aspartate carbamoyltransferase catalytic subunit from Neisseria meningitidis serogroup C / serotype 2a (strain ATCC 700532 / DSM 15464 / FAM18).